Consider the following 277-residue polypeptide: Urease accessory protein UreD (277 aa).

The protein belongs to the UreD family. As to quaternary structure, ureD, UreF and UreG form a complex that acts as a GTP-hydrolysis-dependent molecular chaperone, activating the urease apoprotein by helping to assemble the nickel containing metallocenter of UreC. The UreE protein probably delivers the nickel.

It is found in the cytoplasm. Its function is as follows. Required for maturation of urease via the functional incorporation of the urease nickel metallocenter. The protein is Urease accessory protein UreD of Sinorhizobium medicae (strain WSM419) (Ensifer medicae).